The sequence spans 206 residues: Reticulon-like protein B13 (206 aa).

The Reticulon domain maps to 16-206 (VEDIYLWRRK…GTEEKVKKSE (191 aa)). The next 3 membrane-spanning stretches (helical) occupy residues 27 to 47 (LAFS…FYGF), 50 to 70 (ITIV…WGSL), and 134 to 154 (IGNL…GLTV).

It is found in the endoplasmic reticulum membrane. The protein is Reticulon-like protein B13 (RTNLB13) of Arabidopsis thaliana (Mouse-ear cress).